Reading from the N-terminus, the 134-residue chain is Thioredoxin-like protein Clot (134 aa).

Residues 1–134 (MTLKKVDANP…LILPLLAPST (134 aa)) form the Thioredoxin domain. Residues Cys-48 and Cys-51 each act as nucleophile in the active site. Cys-48 and Cys-51 are disulfide-bonded.

It belongs to the thioredoxin family.

Its function is as follows. Probable thiol-disulfide oxidoreductase that may participate in various redox reactions. The polypeptide is Thioredoxin-like protein Clot (Arabidopsis thaliana (Mouse-ear cress)).